A 469-amino-acid chain; its full sequence is Uronate isomerase (469 aa).

This sequence belongs to the metallo-dependent hydrolases superfamily. Uronate isomerase family.

It catalyses the reaction D-glucuronate = D-fructuronate. The catalysed reaction is aldehydo-D-galacturonate = keto-D-tagaturonate. It functions in the pathway carbohydrate metabolism; pentose and glucuronate interconversion. The sequence is that of Uronate isomerase from Yersinia enterocolitica serotype O:8 / biotype 1B (strain NCTC 13174 / 8081).